The following is a 1204-amino-acid chain: Integrator complex subunit 2 (1204 aa).

Residues 428-444 (FVSLSFCMLLAFSTLVS) form a helical membrane-spanning segment.

Belongs to the Integrator subunit 2 family. Component of the Integrator complex, composed of core subunits INTS1, INTS2, INTS3, INTS4, INTS5, INTS6, INTS7, INTS8, INTS9/RC74, INTS10, INTS11/CPSF3L, INTS12, INTS13, INTS14 and INTS15. The core complex associates with protein phosphatase 2A subunits PPP2CA and PPP2R1A, to form the Integrator-PP2A (INTAC) complex.

The protein localises to the nucleus. The protein resides in the nucleus membrane. It is found in the cytoplasm. Its function is as follows. Component of the integrator complex, a multiprotein complex that terminates RNA polymerase II (Pol II) transcription in the promoter-proximal region of genes. The integrator complex provides a quality checkpoint during transcription elongation by driving premature transcription termination of transcripts that are unfavorably configured for transcriptional elongation: the complex terminates transcription by (1) catalyzing dephosphorylation of the C-terminal domain (CTD) of Pol II subunit POLR2A/RPB1 and SUPT5H/SPT5, (2) degrading the exiting nascent RNA transcript via endonuclease activity and (3) promoting the release of Pol II from bound DNA. The integrator complex is also involved in terminating the synthesis of non-coding Pol II transcripts, such as enhancer RNAs (eRNAs), small nuclear RNAs (snRNAs), telomerase RNAs and long non-coding RNAs (lncRNAs). Mediates recruitment of cytoplasmic dynein to the nuclear envelope, probably as component of the integrator complex. This Homo sapiens (Human) protein is Integrator complex subunit 2.